A 621-amino-acid polypeptide reads, in one-letter code: 1-deoxy-D-xylulose-5-phosphate synthase (621 aa).

Thiamine diphosphate contacts are provided by residues His80 and Gly121–Ser123. A Mg(2+)-binding site is contributed by Asp152. Residues Gly153–Ala154, Asn181, Tyr288, and Glu370 each bind thiamine diphosphate. Residue Asn181 participates in Mg(2+) binding.

Belongs to the transketolase family. DXPS subfamily. In terms of assembly, homodimer. Mg(2+) is required as a cofactor. Thiamine diphosphate serves as cofactor.

It catalyses the reaction D-glyceraldehyde 3-phosphate + pyruvate + H(+) = 1-deoxy-D-xylulose 5-phosphate + CO2. It participates in metabolic intermediate biosynthesis; 1-deoxy-D-xylulose 5-phosphate biosynthesis; 1-deoxy-D-xylulose 5-phosphate from D-glyceraldehyde 3-phosphate and pyruvate: step 1/1. Functionally, catalyzes the acyloin condensation reaction between C atoms 2 and 3 of pyruvate and glyceraldehyde 3-phosphate to yield 1-deoxy-D-xylulose-5-phosphate (DXP). In Aeromonas hydrophila subsp. hydrophila (strain ATCC 7966 / DSM 30187 / BCRC 13018 / CCUG 14551 / JCM 1027 / KCTC 2358 / NCIMB 9240 / NCTC 8049), this protein is 1-deoxy-D-xylulose-5-phosphate synthase.